The primary structure comprises 137 residues: Large ribosomal subunit protein uL16 (137 aa).

The protein belongs to the universal ribosomal protein uL16 family. Part of the 50S ribosomal subunit.

Binds 23S rRNA and is also seen to make contacts with the A and possibly P site tRNAs. This chain is Large ribosomal subunit protein uL16, found in Psychrobacter arcticus (strain DSM 17307 / VKM B-2377 / 273-4).